The chain runs to 359 residues: Peptide chain release factor 1 (359 aa).

At Gln-236 the chain carries N5-methylglutamine. Positions 288–307 (QDEQDAERKSTIGTGDRSER) are disordered. Basic and acidic residues predominate over residues 293–307 (AERKSTIGTGDRSER).

This sequence belongs to the prokaryotic/mitochondrial release factor family. Methylated by PrmC. Methylation increases the termination efficiency of RF1.

It localises to the cytoplasm. In terms of biological role, peptide chain release factor 1 directs the termination of translation in response to the peptide chain termination codons UAG and UAA. This chain is Peptide chain release factor 1 (prfA), found in Streptococcus gordonii (strain Challis / ATCC 35105 / BCRC 15272 / CH1 / DL1 / V288).